Here is a 189-residue protein sequence, read N- to C-terminus: Thymidine kinase (189 aa).

Residues Gly9–Thr16 and Asp85–Gln88 contribute to the ATP site. Glu86 functions as the Proton acceptor in the catalytic mechanism. Zn(2+) contacts are provided by Cys143, Cys146, Cys180, and His183.

It belongs to the thymidine kinase family. Homotetramer.

Its subcellular location is the cytoplasm. It catalyses the reaction thymidine + ATP = dTMP + ADP + H(+). This chain is Thymidine kinase, found in Streptococcus pyogenes serotype M1.